The primary structure comprises 732 residues: Catalase-peroxidase (732 aa).

Residues 97 to 220 (WHSAGTYRTS…LAAVQMGLIY (124 aa)) constitute a cross-link (tryptophyl-tyrosyl-methioninium (Trp-Tyr) (with M-246)). The active-site Proton acceptor is the histidine 98. Positions 220-246 (YVNPEGPDGNPDPVAAGRDIRETFARM) form a cross-link, tryptophyl-tyrosyl-methioninium (Tyr-Met) (with W-97). Histidine 261 serves as a coordination point for heme b.

This sequence belongs to the peroxidase family. Peroxidase/catalase subfamily. As to quaternary structure, homodimer or homotetramer. Heme b serves as cofactor. Post-translationally, formation of the three residue Trp-Tyr-Met cross-link is important for the catalase, but not the peroxidase activity of the enzyme.

It carries out the reaction H2O2 + AH2 = A + 2 H2O. The enzyme catalyses 2 H2O2 = O2 + 2 H2O. Bifunctional enzyme with both catalase and broad-spectrum peroxidase activity. The protein is Catalase-peroxidase of Chlorobium phaeobacteroides (strain DSM 266 / SMG 266 / 2430).